The sequence spans 202 residues: Protein lin-28 homolog A (202 aa).

Residues 1-31 (MGSVSNQQFAGAKPGEEPSGDSPKAENESQP) are disordered. Residues 33 to 106 (HGSGICKWFN…GLESIRVTGP (74 aa)) form the CSD domain. A flexible linker region spans residues 107–130 (GGVFCIGSERRPKSKSLQKRRSKG). CCHC-type zinc fingers lie at residues 131–148 (DRCY…ECKL) and 153–170 (KKCH…NCPA). The Zn(2+) site is built by C133, C136, H141, C146, C155, C158, H163, and C168. Residues 169–202 (PAKAQQSPSSQGKPAYFREKEDMHSSALLPETRE) are disordered.

Belongs to the lin-28 family. Monomer.

The protein resides in the cytoplasm. The protein localises to the rough endoplasmic reticulum. It is found in the P-body. Its subcellular location is the stress granule. It localises to the nucleus. The protein resides in the nucleolus. Its function is as follows. RNA-binding protein that inhibits processing of pre-let-7 miRNAs and regulates translation of mRNAs that control developmental timing, pluripotency and metabolism. Seems to recognize a common structural G-quartet (G4) feature in its miRNA and mRNA targets. 'Translational enhancer' that drives specific mRNAs to polysomes and increases the efficiency of protein synthesis. Its association with the translational machinery and target mRNAs results in an increased number of initiation events per molecule of mRNA and, indirectly, in mRNA stabilization. Suppressor of microRNA (miRNA) biogenesis, including that of let-7. Binds specific target miRNA precursors (pre-miRNAs), recognizing an 5'-GGAG-3' motif found in their terminal loop, and recruits uridylyltransferase. This results in the terminal uridylation of target pre-miRNAs. Uridylated pre-miRNAs fail to be processed by Dicer and undergo degradation. Localized to the periendoplasmic reticulum area, binds to a large number of spliced mRNAs and inhibits the translation of mRNAs destined for the ER, reducing the synthesis of transmembrane proteins, ER or Golgi lumen proteins, and secretory proteins. Binds to and enhances the translation of mRNAs for several metabolic enzymes, increasing glycolysis and oxidative phosphorylation. Which, with the let-7 repression may enhance tissue repair in adult tissue. The polypeptide is Protein lin-28 homolog A (LIN28A) (Gallus gallus (Chicken)).